A 171-amino-acid polypeptide reads, in one-letter code: MCLQIGGGGMDLRGQTFTLEGVAASLLILLAVYTIFQSTVVIAPSWSDYANVQLKQLGYDILRVFDSDGGNSSLKGAIVNCSSGFKAPDEFNANLSKILDSLNAFGKVELIWVNGSKIESHALYGFNKTPTPDAVRVSRFVVVQDLNNSECFNLTTPTTKVVEVRLTLWRT.

A helical transmembrane segment spans residues 21–43 (GVAASLLILLAVYTIFQSTVVIA).

It is found in the membrane. This is an uncharacterized protein from Archaeoglobus fulgidus (strain ATCC 49558 / DSM 4304 / JCM 9628 / NBRC 100126 / VC-16).